The following is a 307-amino-acid chain: Homoserine kinase (307 aa).

Pro-85–Ala-95 is a binding site for ATP.

It belongs to the GHMP kinase family. Homoserine kinase subfamily.

Its subcellular location is the cytoplasm. The catalysed reaction is L-homoserine + ATP = O-phospho-L-homoserine + ADP + H(+). It participates in amino-acid biosynthesis; L-threonine biosynthesis; L-threonine from L-aspartate: step 4/5. Its function is as follows. Catalyzes the ATP-dependent phosphorylation of L-homoserine to L-homoserine phosphate. This is Homoserine kinase from Caldicellulosiruptor bescii (strain ATCC BAA-1888 / DSM 6725 / KCTC 15123 / Z-1320) (Anaerocellum thermophilum).